The chain runs to 127 residues: ATP synthase epsilon chain (127 aa).

The protein belongs to the ATPase epsilon chain family. In terms of assembly, F-type ATPases have 2 components, CF(1) - the catalytic core - and CF(0) - the membrane proton channel. CF(1) has five subunits: alpha(3), beta(3), gamma(1), delta(1), epsilon(1). CF(0) has three main subunits: a, b and c.

It is found in the cell inner membrane. Functionally, produces ATP from ADP in the presence of a proton gradient across the membrane. The sequence is that of ATP synthase epsilon chain from Leptospira interrogans serogroup Icterohaemorrhagiae serovar copenhageni (strain Fiocruz L1-130).